The chain runs to 308 residues: Putative transcription elongation factor S-II (308 aa).

One can recognise a TFIIS N-terminal domain in the interval 5 to 84; sequence EETQSLCKQV…KDWKNVVDGK (80 aa). Positions 82 to 126 are disordered; the sequence is DGKSKSQDDGGAPPAKKHRKESVEEAKPEKKKIEAPYKRPEPSSR. Residues 102–125 are compositionally biased toward basic and acidic residues; that stretch reads ESVEEAKPEKKKIEAPYKRPEPSS. The TFIIS central domain maps to 148 to 263; it reads TRLKSAQLLL…EHQMSVQQGT (116 aa). The TFIIS-type zinc-finger motif lies at 266-306; that stretch reads DMFKCGKCGKKNCTYTQLQTRSSDEPMTTFVFCLECGNRWK. Positions 270, 273, 298, and 301 each coordinate Zn(2+).

It belongs to the TFS-II family.

Its subcellular location is the nucleus. Functionally, necessary for efficient RNA polymerase II transcription elongation past template-encoded arresting sites. The arresting sites in DNA have the property of trapping a certain fraction of elongating RNA polymerases that pass through, resulting in locked ternary complexes. Cleavage of the nascent transcript by S-II allows the resumption of elongation from the new 3'-terminus. This chain is Putative transcription elongation factor S-II, found in Caenorhabditis elegans.